The chain runs to 209 residues: Orotate phosphoribosyltransferase (209 aa).

Residues R96, K100, H102, and 122 to 130 (EDLISTGGS) each bind 5-phospho-alpha-D-ribose 1-diphosphate. Residue S126 coordinates orotate.

Belongs to the purine/pyrimidine phosphoribosyltransferase family. PyrE subfamily. In terms of assembly, homodimer. It depends on Mg(2+) as a cofactor.

It catalyses the reaction orotidine 5'-phosphate + diphosphate = orotate + 5-phospho-alpha-D-ribose 1-diphosphate. Its pathway is pyrimidine metabolism; UMP biosynthesis via de novo pathway; UMP from orotate: step 1/2. Catalyzes the transfer of a ribosyl phosphate group from 5-phosphoribose 1-diphosphate to orotate, leading to the formation of orotidine monophosphate (OMP). The chain is Orotate phosphoribosyltransferase from Listeria innocua serovar 6a (strain ATCC BAA-680 / CLIP 11262).